Reading from the N-terminus, the 266-residue chain is bZIP transcription factor 12 (266 aa).

The bZIP domain maps to 184–248 (AMQRQKRMIK…KELKEMVVPV (65 aa)). Residues 187-205 (RQKRMIKNRESAARSRERK) are basic motif. Residues 202–244 (RERKQAYIAELESLVTQLEEENAKMFKEQEEQHQKRLKELKEM) adopt a coiled-coil conformation. The interval 212–219 (LESLVTQL) is leucine-zipper.

Its subcellular location is the nucleus. In terms of biological role, transcription activator that binds to the ABA-responsive elements (ABREs) in vitro. Involved in abiotic stress responses and abscisic acid (ABA) signaling. Involved in the signaling pathway that induces growth inhibition in response to D-allose. This Oryza sativa subsp. japonica (Rice) protein is bZIP transcription factor 12.